Here is a 95-residue protein sequence, read N- to C-terminus: MKIRPLHDRVVVRRKEEEEKTAGGIVLPGNAKEKPSQGEVIAVGNGRILDNGETRALAVKVGDTVVFGQYAGNTVKVDGEELLIMSENDIYGVLE.

It belongs to the GroES chaperonin family. Heptamer of 7 subunits arranged in a ring. Interacts with the chaperonin GroEL.

The protein localises to the cytoplasm. Together with the chaperonin GroEL, plays an essential role in assisting protein folding. The GroEL-GroES system forms a nano-cage that allows encapsulation of the non-native substrate proteins and provides a physical environment optimized to promote and accelerate protein folding. GroES binds to the apical surface of the GroEL ring, thereby capping the opening of the GroEL channel. The protein is Co-chaperonin GroES of Marinobacter nauticus (strain ATCC 700491 / DSM 11845 / VT8) (Marinobacter aquaeolei).